The following is a 284-amino-acid chain: Diaminopimelate epimerase (284 aa).

Residues Asn20, Gln53, and Asn73 each contribute to the substrate site. Cys82 (proton donor) is an active-site residue. Substrate-binding positions include 83-84 (GN), Asn167, Asn200, and 218-219 (ER). The Proton acceptor role is filled by Cys227. 228–229 (GS) is a binding site for substrate.

The protein belongs to the diaminopimelate epimerase family. As to quaternary structure, homodimer.

It localises to the cytoplasm. It catalyses the reaction (2S,6S)-2,6-diaminopimelate = meso-2,6-diaminopimelate. Its pathway is amino-acid biosynthesis; L-lysine biosynthesis via DAP pathway; DL-2,6-diaminopimelate from LL-2,6-diaminopimelate: step 1/1. Catalyzes the stereoinversion of LL-2,6-diaminopimelate (L,L-DAP) to meso-diaminopimelate (meso-DAP), a precursor of L-lysine and an essential component of the bacterial peptidoglycan. The sequence is that of Diaminopimelate epimerase from Xylella fastidiosa (strain M12).